The sequence spans 188 residues: M-phase phosphoprotein 6 homolog (188 aa).

A disordered region spans residues 93 to 188 (EENVDEKDVS…NKNKKKKKRN (96 aa)). Basic and acidic residues predominate over residues 120 to 149 (LTERERRKQELVSKKAEASRKMEVKAPAKE). Ser167 carries the phosphoserine modification. A compositionally biased stretch (basic residues) spans 174-188 (RKTKKNKNKKKKKRN).

The protein belongs to the MPP6 family. Associates with the RNA exosome complex.

The protein resides in the nucleus. In terms of biological role, RNA-binding protein that associates with the RNA exosome complex. The protein is M-phase phosphoprotein 6 homolog of Schizosaccharomyces pombe (strain 972 / ATCC 24843) (Fission yeast).